The chain runs to 239 residues: MKVFTLLAAAAASIATVVGYETAEKQFVDILIEYQIVQTPEVTKNDVAQWTNGDEVTLKYNIVNNEEKEVTVIGVTGQFTNPVTNEIVTNLTQGRVGPLSIPPGQSASFEQNIGIDVIPNNYELIPQVFFAHDELIKVIPCRGQLATVADKSISFFDPRLIFLELVLLASFAGIAYLAYQIWGKKYIQGTAPVKVKKTTAVTSVPAGTGVSTTTTGASGYDVNWIPEGHLKQKKTKKVA.

Positions M1–G19 are cleaved as a signal peptide. Topologically, residues Y20–L160 are lumenal. A helical transmembrane segment spans residues I161–I181. Over W182–A239 the chain is Cytoplasmic.

The protein belongs to the IRC22 family.

It localises to the endoplasmic reticulum membrane. In terms of biological role, is probably involved in a pathway contributing to genomic integrity. The sequence is that of Increased recombination centers protein 22 (IRC22) from Lodderomyces elongisporus (strain ATCC 11503 / CBS 2605 / JCM 1781 / NBRC 1676 / NRRL YB-4239) (Yeast).